Reading from the N-terminus, the 118-residue chain is Large ribosomal subunit protein bL20 (118 aa).

This sequence belongs to the bacterial ribosomal protein bL20 family.

Its function is as follows. Binds directly to 23S ribosomal RNA and is necessary for the in vitro assembly process of the 50S ribosomal subunit. It is not involved in the protein synthesizing functions of that subunit. This Pseudomonas fluorescens (strain SBW25) protein is Large ribosomal subunit protein bL20.